The chain runs to 30 residues: Cycloviolacin-O7 (30 aa).

The segment at residues 1-30 (SIPCGESCVWIPCTITALAGCKCKSKVCYN) is a cross-link (cyclopeptide (Ser-Asn)). Cystine bridges form between Cys-4–Cys-21, Cys-8–Cys-23, and Cys-13–Cys-28.

This is a cyclic peptide.

Its function is as follows. Probably participates in a plant defense mechanism. The polypeptide is Cycloviolacin-O7 (Viola odorata (Sweet violet)).